A 448-amino-acid polypeptide reads, in one-letter code: Chromosomal replication initiator protein DnaA (448 aa).

Positions 1 to 73 (MNAQLKQLWT…INAIKLITSK (73 aa)) are domain I, interacts with DnaA modulators. The interval 73 to 109 (KKYNIEFSITSEEIFNNQQLKPKSSNDNIVVNDEMTS) is domain II. Positions 110-326 (ILNPKYTFDS…GALIRIVAYS (217 aa)) are domain III, AAA+ region. ATP-binding residues include glycine 154, glycine 156, lysine 157, and threonine 158. Residues 327–448 (SLTNREISVD…DDLNKKITNN (122 aa)) form a domain IV, binds dsDNA region.

The protein belongs to the DnaA family. Oligomerizes as a right-handed, spiral filament on DNA at oriC.

It localises to the cytoplasm. In terms of biological role, plays an essential role in the initiation and regulation of chromosomal replication. ATP-DnaA binds to the origin of replication (oriC) to initiate formation of the DNA replication initiation complex once per cell cycle. Binds the DnaA box (a 9 base pair repeat at the origin) and separates the double-stranded (ds)DNA. Forms a right-handed helical filament on oriC DNA; dsDNA binds to the exterior of the filament while single-stranded (ss)DNA is stabiized in the filament's interior. The ATP-DnaA-oriC complex binds and stabilizes one strand of the AT-rich DNA unwinding element (DUE), permitting loading of DNA polymerase. After initiation quickly degrades to an ADP-DnaA complex that is not apt for DNA replication. Binds acidic phospholipids. In Clostridium novyi (strain NT), this protein is Chromosomal replication initiator protein DnaA.